Consider the following 448-residue polypeptide: tRNA modification GTPase MnmE (448 aa).

Arginine 25, glutamate 82, and lysine 121 together coordinate (6S)-5-formyl-5,6,7,8-tetrahydrofolate. The TrmE-type G domain maps to 217–372; the sequence is GLTTVIAGRP…LRQEIIRRAG (156 aa). Asparagine 227 is a K(+) binding site. GTP is bound by residues 227-232, 246-252, 271-274, and 353-355; these read NVGKSS, TEIPGTT, DTAG, and SAR. Mg(2+) is bound at residue serine 231. K(+)-binding residues include threonine 246, isoleucine 248, and threonine 251. Position 252 (threonine 252) interacts with Mg(2+). Lysine 448 is a binding site for (6S)-5-formyl-5,6,7,8-tetrahydrofolate.

It belongs to the TRAFAC class TrmE-Era-EngA-EngB-Septin-like GTPase superfamily. TrmE GTPase family. In terms of assembly, homodimer. Heterotetramer of two MnmE and two MnmG subunits. It depends on K(+) as a cofactor.

Its subcellular location is the cytoplasm. Functionally, exhibits a very high intrinsic GTPase hydrolysis rate. Involved in the addition of a carboxymethylaminomethyl (cmnm) group at the wobble position (U34) of certain tRNAs, forming tRNA-cmnm(5)s(2)U34. This is tRNA modification GTPase MnmE from Methylococcus capsulatus (strain ATCC 33009 / NCIMB 11132 / Bath).